We begin with the raw amino-acid sequence, 277 residues long: Diaminopimelate epimerase (277 aa).

Substrate-binding residues include Asn11 and Asn65. The active-site Proton donor is the Cys74. Residues 75–76 (GN), Asn180, and 198–199 (ER) each bind substrate. The Proton acceptor role is filled by Cys208. A substrate-binding site is contributed by 209–210 (GT).

The protein belongs to the diaminopimelate epimerase family. Homodimer.

The protein resides in the cytoplasm. The catalysed reaction is (2S,6S)-2,6-diaminopimelate = meso-2,6-diaminopimelate. It participates in amino-acid biosynthesis; L-lysine biosynthesis via DAP pathway; DL-2,6-diaminopimelate from LL-2,6-diaminopimelate: step 1/1. Its function is as follows. Catalyzes the stereoinversion of LL-2,6-diaminopimelate (L,L-DAP) to meso-diaminopimelate (meso-DAP), a precursor of L-lysine and an essential component of the bacterial peptidoglycan. In Gemmatimonas aurantiaca (strain DSM 14586 / JCM 11422 / NBRC 100505 / T-27), this protein is Diaminopimelate epimerase.